Consider the following 24-residue polypeptide: Ascaphin-5 (24 aa).

As to expression, expressed by the skin glands.

It is found in the secreted. Its function is as follows. Antimicrobial peptide. Synthetic peptide shows higher potency against Gram-negative bacteria than against Gram-positive bacteria. Has a very week hemolytic activity. The sequence is that of Ascaphin-5 from Ascaphus truei (Coastal tailed frog).